Here is a 336-residue protein sequence, read N- to C-terminus: Ornithine carbamoyltransferase, catabolic (336 aa).

Residues 57–60, Q84, R108, and 135–138 contribute to the carbamoyl phosphate site; these read STRT and HPTQ. L-ornithine-binding positions include N168, D232, and 236–237; that span reads SM. Carbamoyl phosphate-binding positions include 274–275 and R321; that span reads CL.

The protein belongs to the aspartate/ornithine carbamoyltransferase superfamily. OTCase family. Nonameric or dodecamer (tetramer of trimers).

The protein resides in the cytoplasm. The catalysed reaction is carbamoyl phosphate + L-ornithine = L-citrulline + phosphate + H(+). Its pathway is amino-acid degradation; L-arginine degradation via ADI pathway; carbamoyl phosphate from L-arginine: step 2/2. Its activity is regulated as follows. Inhibited by 2-aminopentanoic acid (norvaline). Activated by phosphate and nucleoside monophosphates such as AMP, GMP, CMP, UMP. Allosterically inhibited by the polyamines such as spermidine and putrescine. Involved in the catabolism of arginine. Catalyzes the phosphorolysis of citrulline, the reverse reaction of the biosynthetic one, yielding ornithine and carbamoyl phosphate which serve to generate ATP from ADP. This catabolic OTCase does not carry out the biosynthetic reaction because of a poor affinity and a marked cooperativity for carbamoyl phosphate. This chain is Ornithine carbamoyltransferase, catabolic, found in Pseudomonas aeruginosa (strain ATCC 15692 / DSM 22644 / CIP 104116 / JCM 14847 / LMG 12228 / 1C / PRS 101 / PAO1).